We begin with the raw amino-acid sequence, 395 residues long: Transcription termination/antitermination protein NusA (395 aa).

Positions 137 to 201 (NSVLMGQVIL…TKKGLLLELS (65 aa)) constitute an S1 motif domain. KH domains lie at 243 to 291 (SHNA…TLAL) and 331 to 378 (KVRL…NESE).

This sequence belongs to the NusA family. Monomer. Binds directly to the core enzyme of the DNA-dependent RNA polymerase and to nascent RNA.

The protein localises to the cytoplasm. Functionally, participates in both transcription termination and antitermination. The polypeptide is Transcription termination/antitermination protein NusA (Helicobacter pylori (strain ATCC 700392 / 26695) (Campylobacter pylori)).